The sequence spans 755 residues: Subtilisin-like protease 4 (755 aa).

A signal peptide spans 1–20 (MDYFLFIALTFLLTFHVHNA). Residues 41–119 (YIIHVTGPEG…ISAHPQRVLH (79 aa)) enclose the Inhibitor I9 domain. Residues 128–611 (FLGLQQDTGV…SGHVNPSRAN (484 aa)) form the Peptidase S8 domain. Asp153 (charge relay system) is an active-site residue. N-linked (GlcNAc...) asparagine glycosylation is present at Asn182. The Charge relay system role is filled by His217. N-linked (GlcNAc...) asparagine glycosylation is found at Asn297, Asn325, Asn393, Asn468, and Asn529. The PA domain occupies 376-461 (PLAYAGKNGK…ATHVSYAAGI (86 aa)). Residue Ser544 is the Charge relay system of the active site. N-linked (GlcNAc...) asparagine glycosylation is found at Asn706 and Asn727.

It belongs to the peptidase S8 family.

Its subcellular location is the secreted. It localises to the extracellular space. The protein resides in the apoplast. Required for arbuscular mycorrhiza (AM) development during AM symbiosis with AM fungi (e.g. Glomeromycota intraradices). The sequence is that of Subtilisin-like protease 4 from Lotus japonicus (Lotus corniculatus var. japonicus).